The following is a 180-amino-acid chain: Large ribosomal subunit protein uL6 (180 aa).

The protein belongs to the universal ribosomal protein uL6 family. In terms of assembly, part of the 50S ribosomal subunit.

This protein binds to the 23S rRNA, and is important in its secondary structure. It is located near the subunit interface in the base of the L7/L12 stalk, and near the tRNA binding site of the peptidyltransferase center. This chain is Large ribosomal subunit protein uL6, found in Picosynechococcus sp. (strain ATCC 27264 / PCC 7002 / PR-6) (Agmenellum quadruplicatum).